The chain runs to 587 residues: MVTAAMLLQCCPVPARGPTSLLGKVVKTHQFLFGIGRCPILATQGPNCSQIHLKATKAGGDSPSWAKGHCPFMLSELQDGKSKIVQKAAPEVQEDVKAFKTDLPSSLVSASLKKPFSSPQEQEQISGKVTHLIQDNMPGNYVFSYDQFFRDKIMEKKQDHTYRVFKTVNRWADAYPFAQHFSEASVASKDVSVWCSNDYLGMSRHPQVLRATQETLQRHGAGAGGTRNISGTSKFHVELEQELAELHQKDSALLFSSCFVANDSTLFTLAKILPGCEIYSDAGNHASMIQGIRNSGAAKFVFRHNDPDHLKKLLEKSNPKIPKIVAFEAVHSMDGAICPLEELCDVSHQYGALTFVDEVHAVGLYGSRGAGIGERDGIMHKIDIISGTLGKAFGCVGGYIASTRDLVDMVRSYAAGFIFTTSLPPMVLSGALESVRLLKGEEGQALRRAHQRNVKHMRQLLMDRGLPVIPCPSHIIPIRVGNAALNSKLCDLLLSKHGIYVQAINYPTVPRGEELLRLAPSPHHSPQMMEDFVEKLLLAWTEVGLPLQDVSVAACNFCRRPVHFELMSEWERSYFGNMGPQYVTTYA.

The transit peptide at M1–S49 directs the protein to the mitochondrion. R163 contributes to the succinyl-CoA binding site. C258 and F259 together coordinate pyridoxal 5'-phosphate. The succinyl-CoA site is built by S280 and K299. The pyridoxal 5'-phosphate site is built by S332, H360, and T388. The active site involves K391. K391 bears the N6-(pyridoxal phosphate)lysine mark. T420 and T421 together coordinate pyridoxal 5'-phosphate. Residue T508 participates in succinyl-CoA binding.

It belongs to the class-II pyridoxal-phosphate-dependent aminotransferase family. In terms of assembly, homodimer. Interacts with SUCLA2. Requires pyridoxal 5'-phosphate as cofactor.

The protein resides in the mitochondrion inner membrane. It catalyses the reaction succinyl-CoA + glycine + H(+) = 5-aminolevulinate + CO2 + CoA. The protein operates within porphyrin-containing compound metabolism; protoporphyrin-IX biosynthesis; 5-aminolevulinate from glycine: step 1/1. Functionally, catalyzes the pyridoxal 5'-phosphate (PLP)-dependent condensation of succinyl-CoA and glycine to form aminolevulinic acid (ALA), with CoA and CO2 as by-products. Contributes significantly to heme formation during erythropoiesis. The sequence is that of 5-aminolevulinate synthase, erythroid-specific, mitochondrial (ALAS2) from Pongo abelii (Sumatran orangutan).